A 139-amino-acid polypeptide reads, in one-letter code: Sec-independent protein translocase protein TatB (139 aa).

The helical transmembrane segment at 1 to 21 (MFDIGFTELLLVGLVALMVLG) threads the bilayer. A disordered region spans residues 69–139 (LDLEREMKQS…PLRSDRPSEP (71 aa)). Residues 80–95 (MPPPASNPAATPPSPP) are compositionally biased toward pro residues.

The protein belongs to the TatB family. The Tat system comprises two distinct complexes: a TatABC complex, containing multiple copies of TatA, TatB and TatC subunits, and a separate TatA complex, containing only TatA subunits. Substrates initially bind to the TatABC complex, which probably triggers association of the separate TatA complex to form the active translocon.

It is found in the cell inner membrane. In terms of biological role, part of the twin-arginine translocation (Tat) system that transports large folded proteins containing a characteristic twin-arginine motif in their signal peptide across membranes. Together with TatC, TatB is part of a receptor directly interacting with Tat signal peptides. TatB may form an oligomeric binding site that transiently accommodates folded Tat precursor proteins before their translocation. The protein is Sec-independent protein translocase protein TatB of Stutzerimonas stutzeri (strain A1501) (Pseudomonas stutzeri).